Reading from the N-terminus, the 177-residue chain is Large ribosomal subunit protein uL6 (177 aa).

Belongs to the universal ribosomal protein uL6 family. In terms of assembly, part of the 50S ribosomal subunit.

Functionally, this protein binds to the 23S rRNA, and is important in its secondary structure. It is located near the subunit interface in the base of the L7/L12 stalk, and near the tRNA binding site of the peptidyltransferase center. In Alteromonas mediterranea (strain DSM 17117 / CIP 110805 / LMG 28347 / Deep ecotype), this protein is Large ribosomal subunit protein uL6.